The sequence spans 180 residues: MLKPSDKWSWYFDKPSGRLMLDLGDRYLFQTNLSDKLLVDCAFSYNDFTVDDASAFQTFKECLSSLDLSEYRRDELTLYCVAAKRFHKPVQPKSWFFHSTGSDYQPSEGELVQLQNGLNQGLFIVLEAGDNASLVSCVELEGFMLSGSKSLSYGEAIKVMHDRMSTAARMNTLMPMALVG.

This sequence belongs to the ZapC family. In terms of assembly, interacts directly with FtsZ.

The protein resides in the cytoplasm. In terms of biological role, contributes to the efficiency of the cell division process by stabilizing the polymeric form of the cell division protein FtsZ. Acts by promoting interactions between FtsZ protofilaments and suppressing the GTPase activity of FtsZ. The chain is Cell division protein ZapC from Vibrio vulnificus (strain CMCP6).